The primary structure comprises 429 residues: Phenylalanine--tRNA ligase, chloroplastic/mitochondrial (429 aa).

The transit peptide at 1-53 (MTVFSVQSTIFSRASVALLSSNGFKRFSFVSSFSSSAAYSPPKMRKRRYPIVS) directs the protein to the chloroplast and mitochondrion. Ala-54 is modified (N-acetylalanine). Substrate-binding positions include 163-166 (SAHQ), Arg-185, 192-194 (THY), 199-201 (QME), Glu-269, and Phe-294. The FDX-ACB domain maps to 338-429 (SKYPPCYKDI…VQKKLNVELR (92 aa)).

It belongs to the class-II aminoacyl-tRNA synthetase family. Monomer.

The protein localises to the plastid. The protein resides in the chloroplast stroma. Its subcellular location is the mitochondrion matrix. The enzyme catalyses tRNA(Phe) + L-phenylalanine + ATP = L-phenylalanyl-tRNA(Phe) + AMP + diphosphate + H(+). Functionally, is responsible for the charging of tRNA(Phe) with phenylalanine in mitochondrial translation. The chain is Phenylalanine--tRNA ligase, chloroplastic/mitochondrial from Arabidopsis thaliana (Mouse-ear cress).